The following is a 435-amino-acid chain: GTPase Obg (435 aa).

An Obg domain is found at methionine 1 to leucine 158. An OBG-type G domain is found at alanine 159–arginine 328. GTP contacts are provided by residues glycine 165 to serine 172, phenylalanine 190 to threonine 194, aspartate 211 to glycine 214, asparagine 280 to aspartate 283, and serine 309 to lysine 311. Mg(2+) contacts are provided by serine 172 and threonine 192. An OCT domain is found at isoleucine 343–alanine 426.

Belongs to the TRAFAC class OBG-HflX-like GTPase superfamily. OBG GTPase family. Monomer. Requires Mg(2+) as cofactor.

It is found in the cytoplasm. In terms of biological role, an essential GTPase which binds GTP, GDP and possibly (p)ppGpp with moderate affinity, with high nucleotide exchange rates and a fairly low GTP hydrolysis rate. Plays a role in control of the cell cycle, stress response, ribosome biogenesis and in those bacteria that undergo differentiation, in morphogenesis control. The polypeptide is GTPase Obg (Dictyoglomus thermophilum (strain ATCC 35947 / DSM 3960 / H-6-12)).